We begin with the raw amino-acid sequence, 261 residues long: Imidazole glycerol phosphate synthase subunit HisF (261 aa).

Active-site residues include D11 and D130.

The protein belongs to the HisA/HisF family. Heterodimer of HisH and HisF.

The protein resides in the cytoplasm. The catalysed reaction is 5-[(5-phospho-1-deoxy-D-ribulos-1-ylimino)methylamino]-1-(5-phospho-beta-D-ribosyl)imidazole-4-carboxamide + L-glutamine = D-erythro-1-(imidazol-4-yl)glycerol 3-phosphate + 5-amino-1-(5-phospho-beta-D-ribosyl)imidazole-4-carboxamide + L-glutamate + H(+). Its pathway is amino-acid biosynthesis; L-histidine biosynthesis; L-histidine from 5-phospho-alpha-D-ribose 1-diphosphate: step 5/9. Its function is as follows. IGPS catalyzes the conversion of PRFAR and glutamine to IGP, AICAR and glutamate. The HisF subunit catalyzes the cyclization activity that produces IGP and AICAR from PRFAR using the ammonia provided by the HisH subunit. The chain is Imidazole glycerol phosphate synthase subunit HisF from Limosilactobacillus fermentum (strain NBRC 3956 / LMG 18251) (Lactobacillus fermentum).